We begin with the raw amino-acid sequence, 99 residues long: NADH-quinone oxidoreductase subunit K (99 aa).

A run of 3 helical transmembrane segments spans residues 3–23 (PENY…GVLL), 28–48 (IVVF…FVTF), and 62–82 (FFTM…IMII).

Belongs to the complex I subunit 4L family. As to quaternary structure, NDH-1 is composed of 14 different subunits. Subunits NuoA, H, J, K, L, M, N constitute the membrane sector of the complex.

The protein localises to the cell membrane. The enzyme catalyses a quinone + NADH + 5 H(+)(in) = a quinol + NAD(+) + 4 H(+)(out). NDH-1 shuttles electrons from NADH, via FMN and iron-sulfur (Fe-S) centers, to quinones in the respiratory chain. The immediate electron acceptor for the enzyme in this species is believed to be a menaquinone. Couples the redox reaction to proton translocation (for every two electrons transferred, four hydrogen ions are translocated across the cytoplasmic membrane), and thus conserves the redox energy in a proton gradient. The sequence is that of NADH-quinone oxidoreductase subunit K from Rhodococcus erythropolis (strain PR4 / NBRC 100887).